A 273-amino-acid polypeptide reads, in one-letter code: TIP41-like protein (273 aa).

Belongs to the TIP41 family.

It localises to the cytoplasm. May be a regulator of serine/threonine-protein phosphatases 2A (PP2A) and 4 (PP4). This Xenopus tropicalis (Western clawed frog) protein is TIP41-like protein (tiprl).